A 220-amino-acid chain; its full sequence is Guanylate kinase (220 aa).

The region spanning Gly-14 to Asn-194 is the Guanylate kinase-like domain. Ser-21–Ser-28 is a binding site for ATP.

This sequence belongs to the guanylate kinase family.

The protein localises to the cytoplasm. It catalyses the reaction GMP + ATP = GDP + ADP. Functionally, essential for recycling GMP and indirectly, cGMP. This chain is Guanylate kinase, found in Brucella abortus (strain 2308).